The following is a 2028-amino-acid chain: MGSQVLQILRQGVWASLTGGWFFDPHQSTFSNCFHLYVWIFLLIFPFLLYMVLPPSLMVAGVYCLVVAVIFATIKTVNYRLHAMFDQGEIVEKRNSTMGEQEEEAAQGESSLPRDPGVEMTVFRKVSSTPPVRCSSQHSVFGFNQVSELLPRMEDSGPLRDIKELVREQGSNNVIVTSADREMLKLSSQEKLIGDLPQTPPGVVPDPSLPSTDSSERSPMAGDGVPWGGSGVADTPMSPLLKGSLSQELSKSFLTLTRPDRALVRTSSRREQCRGTGGYQPLDRRGSGDPMPQKAGSSDSCFSGTDRETLSSFKSEKTNSTHLDSPPGGHAPEGSDTDPPSEAELPASPDAGVPSDDTLRSFDTVIGAGTPPGQTEPLLVVRPKDLALLRPSKRRPPMRGHSPPGRTPRRPLLEGSGFFEDEDTSEGSELSPASSLRSQRRYSTDSSSSTSCYSPESSQGAAGGPRKRRAPHGAEEGTAVPPKRPYGTQRTPSTASAKTHARVLSMDGAGGDVLRAPLAGSKAELEAQPGMELAAGEPAVLPPEARRGPAANQPGWRGELQEEGAVGGAPEETGQRECTSNVRRAQAIRRRHNAGSNPTPPASVMGSPPSSLQEAQRGRAASHSRALTLPSALHFASSLLLTRAGPNVHEASNFDDTSEGAVHYFYDESGVRRSYTFGLAGGGYENPVSQPGEQAANGAWDRHSHSSSFHSADVPEATGGLNLLQPRPVVLQGMQVRRVPLEIPEEQTLMEEAPPRAQHSYKYWFLPGRWTSVRYERLALLALLDRTRGVMENIFGVGLSSLVAFLGYLLLLKGFFTDIWVFQFCLVIASCQYSLLKSVQPDAASPMHGHNWVIAYSRPVYFCICCLLIWLLDALGTAQPFPPVSLYGLTLFSASFFFCARDVATVFTLCFPFVFLLGLLPQVNTCLMYLLEQIDMHGFGGTAATSPLTAVFSLTRSLLAAALLYGFCLGAIKTPWPEQHVPVLFSVFCGLLVAMSYHLSRQSSDPTVLWSLVRSKLFPELEERSLETARVEPPDPLPEKMRQSVREVLHSDLVMCVVIAVLTFAVSASTVFIALKSVLGFVLYALAGAVGFFTHYLLPQLRKQLPWFCLSQPVLKPLEYSQYEVRGAAQVMWFEKLYAGLQCAEKYLIYPAVVLNALTVDAHTVVSHPDKFCLYCRALLMTVAGLKLLRSAFCCPPQQYLTLAFTVLLFHFDYPRLSQGFLLDYFLMSLLCSKLWDLLYKLRFVLTYIAPWQITWGSAFHAFAQPFAVPHSAMLFLQALLSGLFSTPLNPLLGSAVFIMSYARPLKFWERDYNTKRVDHSNTRLVTQLDRNPGADDNNLNSIFYEHLTRSLQHTLCGDLVLGRWGNYGPGDCFVLASDYLNALVHLIEVGNGLITFQLRGLEFRGTYCQQREVEAITEGVEEDEGCCCCEPGHLPRVLSFNAAFGQRWLAWEVTASKYVLEGYSISDNNAASMLQVFDLRKILVTYYVKSIIYYVSRSPKLETWLNHEGIAAALRPVRALGYADSDPTFSLSVDEDYDLRLSGLSLPSFCAVHLEWIQYCASRRSQPVDQDWNSPLVTLCFGLCVLGRRALGTASHSMSASLEPFLYGLHALFKGDFRITSPRDEWVFADMDLLHRVVAPGVRMALKLHQDHFTSPDEYEEPAALYDAIAANEERLVISHEGDPAWRSAILSNTPSLLALRHVMDDASDEYKIIMLNRRHLSFRVIKVNRECVRGLWAGQQQELVFLRNRNPERGSIQNAKQALRNMINSSCDQPLGYPIYVSPLTTSLAGSHPQLRALWGGPVSLGAIARWLLRSWERLHKGCGAGCNSGGNVDDSDCGGGGGLTSLSNHPPLAHPTPENAAGSSEQPLPPGPSWGPRPSLSGSGDGRPPPLLQWPPPRLPGPPPASPAPTEGPRPSRPSGPALLNSEGPSGKWSLGGRKGLGGPDGEPASGSPKGGTPKSQAPLDLSLSPDVSSEASPARTTQDLPCLDSSIPEGCTPSGAPGDWPVPAEERESPAAQPLLEHQY.

Helical transmembrane passes span 33–53 (CFHL…YMVL) and 54–74 (PPSL…FATI). Asn95 carries an N-linked (GlcNAc...) asparagine glycan. The tract at residues 96-116 (STMGEQEEEAAQGESSLPRDP) is disordered. Ser127 is modified (phosphoserine). The residue at position 129 (Thr129) is a Phosphothreonine. Disordered stretches follow at residues 193–239 (IGDL…PMSP) and 263–625 (LVRT…SHSR). Pro residues predominate over residues 198 to 208 (QTPPGVVPDPS). Composition is skewed to basic and acidic residues over residues 263–273 (LVRTSSRREQC) and 305–319 (TDRE…EKTN). The N-linked (GlcNAc...) asparagine glycan is linked to Asn319. Thr370 carries the post-translational modification Phosphothreonine. Phosphoserine occurs at positions 392 and 431. Residues 427-437 (GSELSPASSLR) show a composition bias toward polar residues. The span at 444–459 (TDSSSSTSCYSPESSQ) shows a compositional bias: low complexity. The segment covering 488–497 (TQRTPSTASA) has biased composition (polar residues). Residues Ser505 and Ser521 each carry the phosphoserine modification. A run of 7 helical transmembrane segments spans residues 793-815 (NIFG…LKGF), 819-836 (IWVF…YSLL), 852-872 (WVIA…IWLL), 880-900 (PFPP…FFCA), 903-923 (VATV…LPQV), 946-968 (SPLT…YGFC), and 980-1000 (HVPV…YHLS). Phosphoserine is present on Ser1025. 4 helical membrane passes run 1053 to 1073 (LVMC…TVFI), 1078 to 1098 (VLGF…HYLL), 1244 to 1264 (FVLT…HAFA), and 1280 to 1300 (LLSG…VFIM). At Ser1697 the chain carries Phosphoserine. Asn1770 is a glycosylation site (N-linked (GlcNAc...) asparagine). Residues 1845–2028 (GLTSLSNHPP…AAQPLLEHQY (184 aa)) are disordered. Pro residues predominate over residues 1890–1921 (RPPPLLQWPPPRLPGPPPASPAPTEGPRPSRP). Ser1909 and Ser1955 each carry phosphoserine. Low complexity predominate over residues 1966-1977 (PLDLSLSPDVSS). A compositionally biased stretch (polar residues) spans 1978–1987 (EASPARTTQD).

The protein belongs to the pecanex family.

It is found in the membrane. The protein is Pecanex-like protein 3 of Mus musculus (Mouse).